The sequence spans 224 residues: uncharacterized protein (224 aa).

4 consecutive transmembrane segments (helical) span residues 25–45 (ALAWLCDTVLLAILLAIIYGI), 56–76 (VFLIMTVSQAVLWLTYFVILP), 107–127 (ELFLWVWYSVIFLALAIYFFV), and 149–169 (IFVKILLSVISVLQLVFVVYF).

The protein resides in the cell membrane. This is an uncharacterized protein from Mycoplasma pneumoniae (strain ATCC 29342 / M129 / Subtype 1) (Mycoplasmoides pneumoniae).